The primary structure comprises 1119 residues: Protein translocase subunit SecA (1119 aa).

ATP-binding positions include Q177, 195–199 (GEGKT), and D692. The interval 1025-1081 (APSIHEARQTKSKEKVETRKEEIPNMDERAAQSRAAGNTQRQQPEVTETIVRDRPKI) is disordered. Basic and acidic residues predominate over residues 1029–1055 (HEARQTKSKEKVETRKEEIPNMDERAA). The span at 1059–1070 (AAGNTQRQQPEV) shows a compositional bias: polar residues.

It belongs to the SecA family. In terms of assembly, monomer and homodimer. Part of the essential Sec protein translocation apparatus which comprises SecA, SecYEG and auxiliary proteins SecDF. Other proteins may also be involved.

It is found in the cell inner membrane. It localises to the cytoplasm. It catalyses the reaction ATP + H2O + cellular proteinSide 1 = ADP + phosphate + cellular proteinSide 2.. In terms of biological role, part of the Sec protein translocase complex. Interacts with the SecYEG preprotein conducting channel. Has a central role in coupling the hydrolysis of ATP to the transfer of proteins into and across the cell membrane, serving as an ATP-driven molecular motor driving the stepwise translocation of polypeptide chains across the membrane. This Christiangramia forsetii (strain DSM 17595 / CGMCC 1.15422 / KT0803) (Gramella forsetii) protein is Protein translocase subunit SecA.